A 209-amino-acid polypeptide reads, in one-letter code: Imidazole glycerol phosphate synthase subunit HisH (209 aa).

Residues 1–205 (MIAIIDYGMG…QGVVEAWKSS (205 aa)) form the Glutamine amidotransferase type-1 domain. The Nucleophile role is filled by cysteine 79. Active-site residues include histidine 180 and glutamate 182.

In terms of assembly, heterodimer of HisH and HisF.

It is found in the cytoplasm. It catalyses the reaction 5-[(5-phospho-1-deoxy-D-ribulos-1-ylimino)methylamino]-1-(5-phospho-beta-D-ribosyl)imidazole-4-carboxamide + L-glutamine = D-erythro-1-(imidazol-4-yl)glycerol 3-phosphate + 5-amino-1-(5-phospho-beta-D-ribosyl)imidazole-4-carboxamide + L-glutamate + H(+). The catalysed reaction is L-glutamine + H2O = L-glutamate + NH4(+). The protein operates within amino-acid biosynthesis; L-histidine biosynthesis; L-histidine from 5-phospho-alpha-D-ribose 1-diphosphate: step 5/9. Its function is as follows. IGPS catalyzes the conversion of PRFAR and glutamine to IGP, AICAR and glutamate. The HisH subunit catalyzes the hydrolysis of glutamine to glutamate and ammonia as part of the synthesis of IGP and AICAR. The resulting ammonia molecule is channeled to the active site of HisF. The chain is Imidazole glycerol phosphate synthase subunit HisH from Bacillus cereus (strain ATCC 14579 / DSM 31 / CCUG 7414 / JCM 2152 / NBRC 15305 / NCIMB 9373 / NCTC 2599 / NRRL B-3711).